We begin with the raw amino-acid sequence, 382 residues long: Gap junction alpha-1 protein (382 aa).

The Cytoplasmic portion of the chain corresponds to 2–23 (GDWSALGKLLDKVQAYSTAGGK). Ser5 is modified (phosphoserine). The helical transmembrane segment at 24–44 (VWLSVLFIFRILLLGTAVESA) threads the bilayer. Over 45–76 (WGDEQSAFRCNTQQPGCENVCYDKSFPISHVR) the chain is Extracellular. Disulfide bonds link Cys54–Cys192 and Cys187–Cys198. A helical membrane pass occupies residues 77–97 (FWVLQIIFVSVPTLLYLAHVF). The Cytoplasmic segment spans residues 98–155 (YVMRKEEKLNKKEEELKVAQTDGVNVEMHLKQIEIKKFKYGIEEHGKVKMRGGLLRTY). Residue Lys144 forms a Glycyl lysine isopeptide (Lys-Gly) (interchain with G-Cter in SUMO) linkage. A helical transmembrane segment spans residues 156-176 (IISILFKSVFEVAFLLIQWYI). The Extracellular segment spans residues 177–207 (YGFSLSAVYTCKRDPCPHQVDCFLSRPTEKT). The helical transmembrane segment at 208 to 228 (IFIIFMLVVSLVSLALNIIEL) threads the bilayer. The Cytoplasmic portion of the chain corresponds to 229–382 (FYAFFKGVKD…SRPRPDDLEI (154 aa)). Lys237 is covalently cross-linked (Glycyl lysine isopeptide (Lys-Gly) (interchain with G-Cter in SUMO)). An interaction with NOV region spans residues 244–382 (SDPYHATTGP…SRPRPDDLEI (139 aa)). Residue Tyr247 is modified to Phosphotyrosine. Residues Ser255, Ser257, and Ser262 each carry the phosphoserine modification. An interaction with UBQLN4 region spans residues 264–382 (KYAYFNGCSS…SRPRPDDLEI (119 aa)). Cys271 carries the S-nitrosocysteine modification. Thr275 carries the post-translational modification Phosphothreonine. 2 positions are modified to phosphoserine: Ser306 and Ser314. Residues 317–332 (QNRMGQAGSTISNSHA) show a composition bias toward polar residues. A disordered region spans residues 317–382 (QNRMGQAGST…SRPRPDDLEI (66 aa)). Ser325 bears the Phosphoserine; by CK1 mark. The residue at position 326 (Thr326) is a Phosphothreonine. Phosphoserine; by CK1 occurs at positions 328 and 330. Residues 342–351 (QNSKKLDAGH) show a composition bias toward basic and acidic residues. 2 positions are modified to phosphoserine: Ser344 and Ser365. The span at 362–374 (RPSSRASSRASSR) shows a compositional bias: low complexity. Position 368 is a phosphoserine; by PKC/PRKCG and PKC/PRKCD (Ser368). A phosphoserine mark is found at Ser369 and Ser373.

The protein belongs to the connexin family. Alpha-type (group II) subfamily. A connexon is composed of a hexamer of connexins. Interacts with SGSM3. Interacts with RIC1/CIP150. Interacts with CNST and CSNK1D. Interacts (via C-terminus) with TJP1. Interacts (via C-terminus) with SRC (via SH3 domain). Interacts (not ubiquitinated) with UBQLN4 (via UBA domain). Interacts with NOV. Interacts with TMEM65. Interacts with ANK3/ANKG and PKP2. Post-translationally, phosphorylation at Ser-325, Ser-328 and Ser-330 by CK1 modulates gap junction assembly. Phosphorylated at Ser-368 by PRKCG; phosphorylation induces disassembly of gap junction plaques and inhibition of gap junction activity. Phosphorylation at Ser-368 by PRKCD triggers its internalization into small vesicles leading to proteasome-mediated degradation. Sumoylated with SUMO1, SUMO2 and SUMO3, which may regulate the level of functional Cx43 gap junctions at the plasma membrane. May be desumoylated by SENP1 or SENP2. In terms of processing, S-nitrosylation at Cys-271 is enriched at the muscle endothelial gap junction in arteries, it augments channel permeability and may regulate of smooth muscle cell to endothelial cell communication. Post-translationally, acetylated in the developing cortex; leading to delocalization from the cell membrane.

Its subcellular location is the cell membrane. The protein resides in the cell junction. It is found in the gap junction. It localises to the endoplasmic reticulum. Functionally, gap junction protein that acts as a regulator of bladder capacity. A gap junction consists of a cluster of closely packed pairs of transmembrane channels, the connexons, through which materials of low MW diffuse from one cell to a neighboring cell. May play a critical role in the physiology of hearing by participating in the recycling of potassium to the cochlear endolymph. Negative regulator of bladder functional capacity: acts by enhancing intercellular electrical and chemical transmission, thus sensitizing bladder muscles to cholinergic neural stimuli and causing them to contract. May play a role in cell growth inhibition through the regulation of NOV expression and localization. Plays an essential role in gap junction communication in the ventricles. The polypeptide is Gap junction alpha-1 protein (GJA1) (Sus scrofa (Pig)).